The following is a 94-amino-acid chain: Large ribosomal subunit protein eL36 (94 aa).

Over residues 1–25 (MKNAYKKVRVRYPVKRPDVKRKQRG) the composition is skewed to basic residues. The tract at residues 1–30 (MKNAYKKVRVRYPVKRPDVKRKQRGPRAET) is disordered.

This sequence belongs to the eukaryotic ribosomal protein eL36 family. In terms of assembly, component of the large ribosomal subunit.

It is found in the cytoplasm. The sequence is that of Large ribosomal subunit protein eL36 (RPL36) from Encephalitozoon cuniculi (strain GB-M1) (Microsporidian parasite).